The following is a 336-amino-acid chain: MTEIQKPYDLKGRSLLKESDFTKAEFEGLIDFAITLKEYKKNGIKHHYLSGKNIALLFEKNSTRTRAAFTVASIDLGAHPEFLGKNDIQLGKKESVEDTAKVLGRMFDGIEFRGFSQQAVEDLAKFSGVPVWNGLTDDWHPTQMLADFMTIKENFGYLEGINLTYVGDGRNNIAHSLMVAGAMLGVNVRICTPKSLNPKEAYVDIAKEKASQYGGSIMITDNIAEAVENTDAIYTDVWVSMGEESEFEQRINLLKDYQVNQQMFDLTGKDSTIFLHCLPAFHDTNTLYGQEIYEKYGLAEMEVTDQIFRSEHSKVFDQAENRMHTIKAVMAATLGS.

Carbamoyl phosphate-binding positions include 62-65 (STRT), Gln89, Arg113, and 140-143 (HPTQ). L-ornithine contacts are provided by residues Asn172, Asp236, and 240–241 (SM). Residues 277–278 (CL) and Arg322 each bind carbamoyl phosphate.

It belongs to the aspartate/ornithine carbamoyltransferase superfamily. OTCase family.

It is found in the cytoplasm. It catalyses the reaction carbamoyl phosphate + L-ornithine = L-citrulline + phosphate + H(+). It functions in the pathway amino-acid degradation; L-arginine degradation via ADI pathway; carbamoyl phosphate from L-arginine: step 2/2. In terms of biological role, reversibly catalyzes the transfer of the carbamoyl group from carbamoyl phosphate (CP) to the N(epsilon) atom of ornithine (ORN) to produce L-citrulline. The polypeptide is Ornithine carbamoyltransferase, catabolic (arcB) (Staphylococcus aureus (strain N315)).